Here is a 243-residue protein sequence, read N- to C-terminus: Triosephosphate isomerase (243 aa).

9–11 (NWK) contributes to the substrate binding site. The active-site Electrophile is H96. The Proton acceptor role is filled by E165. Substrate is bound by residues G171, S204, and 225-226 (GG).

The protein belongs to the triosephosphate isomerase family. Homodimer.

Its subcellular location is the cytoplasm. It carries out the reaction D-glyceraldehyde 3-phosphate = dihydroxyacetone phosphate. Its pathway is carbohydrate biosynthesis; gluconeogenesis. It participates in carbohydrate degradation; glycolysis; D-glyceraldehyde 3-phosphate from glycerone phosphate: step 1/1. Involved in the gluconeogenesis. Catalyzes stereospecifically the conversion of dihydroxyacetone phosphate (DHAP) to D-glyceraldehyde-3-phosphate (G3P). This is Triosephosphate isomerase from Parasynechococcus marenigrum (strain WH8102).